Reading from the N-terminus, the 305-residue chain is Sulfate adenylyltransferase subunit 2 (305 aa).

Belongs to the PAPS reductase family. CysD subfamily. In terms of assembly, heterodimer composed of CysD, the smaller subunit, and CysN.

It carries out the reaction sulfate + ATP + H(+) = adenosine 5'-phosphosulfate + diphosphate. The protein operates within sulfur metabolism; hydrogen sulfide biosynthesis; sulfite from sulfate: step 1/3. Its function is as follows. With CysN forms the ATP sulfurylase (ATPS) that catalyzes the adenylation of sulfate producing adenosine 5'-phosphosulfate (APS) and diphosphate, the first enzymatic step in sulfur assimilation pathway. APS synthesis involves the formation of a high-energy phosphoric-sulfuric acid anhydride bond driven by GTP hydrolysis by CysN coupled to ATP hydrolysis by CysD. The protein is Sulfate adenylyltransferase subunit 2 of Pseudomonas aeruginosa (strain LESB58).